The primary structure comprises 110 residues: DNA-directed RNA polymerase subunit omega (110 aa).

This sequence belongs to the RNA polymerase subunit omega family. As to quaternary structure, the RNAP catalytic core consists of 2 alpha, 1 beta, 1 beta' and 1 omega subunit. When a sigma factor is associated with the core the holoenzyme is formed, which can initiate transcription.

It catalyses the reaction RNA(n) + a ribonucleoside 5'-triphosphate = RNA(n+1) + diphosphate. In terms of biological role, promotes RNA polymerase assembly. Latches the N- and C-terminal regions of the beta' subunit thereby facilitating its interaction with the beta and alpha subunits. This Mycobacterium bovis (strain ATCC BAA-935 / AF2122/97) protein is DNA-directed RNA polymerase subunit omega (rpoZ).